A 208-amino-acid chain; its full sequence is NAD(P)H-quinone oxidoreductase subunit I (208 aa).

4Fe-4S ferredoxin-type domains are found at residues 55–84 (GRIHYEFDKCIACEVCVRVCPINLPVVDWV) and 95–124 (RNYSIDFGVCIFCGNCVEYCPTNCLSMTEE). The [4Fe-4S] cluster site is built by C64, C67, C70, C74, C104, C107, C110, and C114.

Belongs to the complex I 23 kDa subunit family. NDH-1 is composed of at least 11 different subunits. The cofactor is [4Fe-4S] cluster.

Its subcellular location is the cellular thylakoid membrane. The catalysed reaction is a plastoquinone + NADH + (n+1) H(+)(in) = a plastoquinol + NAD(+) + n H(+)(out). The enzyme catalyses a plastoquinone + NADPH + (n+1) H(+)(in) = a plastoquinol + NADP(+) + n H(+)(out). NDH-1 shuttles electrons from an unknown electron donor, via FMN and iron-sulfur (Fe-S) centers, to quinones in the respiratory and/or the photosynthetic chain. The immediate electron acceptor for the enzyme in this species is believed to be plastoquinone. Couples the redox reaction to proton translocation, and thus conserves the redox energy in a proton gradient. This is NAD(P)H-quinone oxidoreductase subunit I from Prochlorococcus marinus (strain MIT 9215).